Consider the following 65-residue polypeptide: Large ribosomal subunit protein bL35 (65 aa).

Belongs to the bacterial ribosomal protein bL35 family.

This is Large ribosomal subunit protein bL35 from Pectobacterium atrosepticum (strain SCRI 1043 / ATCC BAA-672) (Erwinia carotovora subsp. atroseptica).